A 75-amino-acid chain; its full sequence is Large ribosomal subunit protein bL31 (75 aa).

This sequence belongs to the bacterial ribosomal protein bL31 family. Type A subfamily. As to quaternary structure, part of the 50S ribosomal subunit.

Binds the 23S rRNA. In Zymomonas mobilis subsp. mobilis (strain ATCC 31821 / ZM4 / CP4), this protein is Large ribosomal subunit protein bL31.